We begin with the raw amino-acid sequence, 347 residues long: Protein O-mannose kinase (347 aa).

Residues 1-14 are Cytoplasmic-facing; that stretch reads MGGTAVGGVIGVRC. Residues 15-35 traverse the membrane as a helical; Signal-anchor for type II membrane protein segment; sequence GVPAVLLCLGALLCANVLLYF. At 36–347 the chain is on the lumenal side; that stretch reads YLDALYQNTN…SQSQRVRDML (312 aa). The region spanning 79–347 is the Protein kinase domain; that stretch reads VRRVKLIGQG…SQSQRVRDML (269 aa).

It belongs to the protein kinase superfamily. Ser/Thr protein kinase family. STKL subfamily.

The protein resides in the endoplasmic reticulum membrane. It catalyses the reaction 3-O-[beta-D-GalNAc-(1-&gt;3)-beta-D-GlcNAc-(1-&gt;4)-alpha-D-Man]-L-Thr-[protein] + ATP = 3-O-[beta-D-GalNAc-(1-&gt;3)-beta-D-GlcNAc-(1-&gt;4)-(O-6-P-alpha-D-Man)]-Thr-[protein] + ADP + H(+). Protein O-mannose kinase that specifically mediates phosphorylation at the 6-position of an O-mannose of the trisaccharide (N-acetylgalactosamine (GalNAc)-beta-1,3-N-acetylglucosamine (GlcNAc)-beta-1,4-mannose) to generate phosphorylated O-mannosyl trisaccharide (N-acetylgalactosamine-beta-1,3-N-acetylglucosamine-beta-1,4-(phosphate-6-)mannose). Phosphorylated O-mannosyl trisaccharide is a carbohydrate structure present in alpha-dystroglycan (dag1), which is required for binding laminin G-like domain-containing extracellular proteins with high affinity. Only shows kinase activity when the GalNAc-beta-3-GlcNAc-beta-terminus is linked to the 4-position of O-mannose, suggesting that this disaccharide serves as the substrate recognition motif. The sequence is that of Protein O-mannose kinase (pomk) from Danio rerio (Zebrafish).